We begin with the raw amino-acid sequence, 399 residues long: Formate-dependent phosphoribosylglycinamide formyltransferase (399 aa).

N(1)-(5-phospho-beta-D-ribosyl)glycinamide contacts are provided by residues 8 to 9 (EL) and Glu-68. ATP contacts are provided by residues Arg-100, Lys-141, 146–151 (SSGHGQ), 185–188 (EALA), and Glu-193. The ATP-grasp domain maps to 105-308 (VLAHEELGLP…EFALHARAIL (204 aa)). Mg(2+) contacts are provided by Glu-266 and Glu-279. Residues Asp-286, Lys-361, and 368–369 (RR) each bind N(1)-(5-phospho-beta-D-ribosyl)glycinamide.

The protein belongs to the PurK/PurT family. As to quaternary structure, homodimer.

The catalysed reaction is N(1)-(5-phospho-beta-D-ribosyl)glycinamide + formate + ATP = N(2)-formyl-N(1)-(5-phospho-beta-D-ribosyl)glycinamide + ADP + phosphate + H(+). Its pathway is purine metabolism; IMP biosynthesis via de novo pathway; N(2)-formyl-N(1)-(5-phospho-D-ribosyl)glycinamide from N(1)-(5-phospho-D-ribosyl)glycinamide (formate route): step 1/1. Involved in the de novo purine biosynthesis. Catalyzes the transfer of formate to 5-phospho-ribosyl-glycinamide (GAR), producing 5-phospho-ribosyl-N-formylglycinamide (FGAR). Formate is provided by PurU via hydrolysis of 10-formyl-tetrahydrofolate. The protein is Formate-dependent phosphoribosylglycinamide formyltransferase of Bifidobacterium adolescentis (strain ATCC 15703 / DSM 20083 / NCTC 11814 / E194a).